The sequence spans 475 residues: Serralysin G (475 aa).

Positions 1–14 (MALYGKKTDLSSAS) are excised as a propeptide. H186 contributes to the Zn(2+) binding site. E187 is an active-site residue. Zn(2+) contacts are provided by H190 and Y226. Positions 261, 263, 265, 293, 295, 296, 298, 337, 342, 344, 346, 351, 355, 359, 360, 361, 362, 364, 368, 370, 371, 373, 377, 378, 379, 380, 382, 391, 398, and 408 each coordinate Ca(2+). 2 Hemolysin-type calcium-binding repeats span residues 340-357 (IGGS…DNRI) and 358-375 (DGGA…ADIL).

It belongs to the peptidase M10B family. It depends on Ca(2+) as a cofactor. Zn(2+) serves as cofactor.

It is found in the secreted. It carries out the reaction Preferential cleavage of bonds with hydrophobic residues in P1'.. The sequence is that of Serralysin G (prtG) from Dickeya chrysanthemi (Pectobacterium chrysanthemi).